Consider the following 350-residue polypeptide: Erythronate-4-phosphate dehydrogenase (350 aa).

Positions 45 and 66 each coordinate substrate. NAD(+) contacts are provided by residues 124–125 (QV), D144, 203–205 (ASR), and D226. R205 is an active-site residue. The active site involves E231. The Proton donor role is filled by H248. G251 is a binding site for NAD(+).

Belongs to the D-isomer specific 2-hydroxyacid dehydrogenase family. PdxB subfamily. In terms of assembly, homodimer.

It is found in the cytoplasm. The enzyme catalyses 4-phospho-D-erythronate + NAD(+) = (R)-3-hydroxy-2-oxo-4-phosphooxybutanoate + NADH + H(+). The protein operates within cofactor biosynthesis; pyridoxine 5'-phosphate biosynthesis; pyridoxine 5'-phosphate from D-erythrose 4-phosphate: step 2/5. Its function is as follows. Catalyzes the oxidation of erythronate-4-phosphate to 3-hydroxy-2-oxo-4-phosphonooxybutanoate. The chain is Erythronate-4-phosphate dehydrogenase from Legionella pneumophila (strain Lens).